Here is a 1845-residue protein sequence, read N- to C-terminus: Vacuolar membrane-associated protein iml1 (1845 aa).

Basic residues predominate over residues 1 to 12 (MSLRGPMKRSHL). Disordered regions lie at residues 1 to 48 (MSLR…HGQD), 547 to 566 (PHLS…TAHK), 732 to 822 (KRRH…GKAP), and 854 to 982 (SALP…SPQN). Residues 24–33 (ATSSQAQAQS) are compositionally biased toward polar residues. Basic and acidic residues predominate over residues 34 to 47 (HPRDGGPYNDEHGQ). A compositionally biased stretch (basic residues) spans 732-743 (KRRHQRKPSKPK). The span at 755 to 772 (AHERLSARSVLRLREHET) shows a compositional bias: basic and acidic residues. Low complexity-rich tracts occupy residues 801–822 (VPSK…GKAP) and 874–886 (VDSF…ASIS). Over residues 969-982 (NGGSRDSSIKSPQN) the composition is skewed to polar residues. The DEP domain maps to 1344–1419 (GDKGVRMMDR…DGNYFYQISS (76 aa)). 2 disordered regions span residues 1425–1483 (RPES…KNKA) and 1825–1845 (NDSV…LNLS).

It belongs to the IML1 family.

It localises to the vacuole membrane. This Aspergillus clavatus (strain ATCC 1007 / CBS 513.65 / DSM 816 / NCTC 3887 / NRRL 1 / QM 1276 / 107) protein is Vacuolar membrane-associated protein iml1 (iml1).